Here is a 511-residue protein sequence, read N- to C-terminus: Bifunctional purine biosynthesis protein PurH (511 aa).

The MGS-like domain occupies 1 to 147; that stretch reads MIQIKRALIS…KNYKHTLVLT (147 aa).

This sequence belongs to the PurH family.

The enzyme catalyses (6R)-10-formyltetrahydrofolate + 5-amino-1-(5-phospho-beta-D-ribosyl)imidazole-4-carboxamide = 5-formamido-1-(5-phospho-D-ribosyl)imidazole-4-carboxamide + (6S)-5,6,7,8-tetrahydrofolate. It catalyses the reaction IMP + H2O = 5-formamido-1-(5-phospho-D-ribosyl)imidazole-4-carboxamide. It functions in the pathway purine metabolism; IMP biosynthesis via de novo pathway; 5-formamido-1-(5-phospho-D-ribosyl)imidazole-4-carboxamide from 5-amino-1-(5-phospho-D-ribosyl)imidazole-4-carboxamide (10-formyl THF route): step 1/1. The protein operates within purine metabolism; IMP biosynthesis via de novo pathway; IMP from 5-formamido-1-(5-phospho-D-ribosyl)imidazole-4-carboxamide: step 1/1. The polypeptide is Bifunctional purine biosynthesis protein PurH (Leptospira interrogans serogroup Icterohaemorrhagiae serovar Lai (strain 56601)).